Here is a 147-residue protein sequence, read N- to C-terminus: MAPCPQPESCPAGSPLGLICLSLLLIPASAGTYCECSLGLSREALIALIVVLAGVSASCFCALVVVAIGVFRAKGDTCPGHSENRLVGPYGVQEDRIDLHTVHVESHLMDPDLDVSMMPSLDGPGLMTMTAPLEPPPPPPPPPPLPQ.

The signal sequence occupies residues 1–31; it reads MAPCPQPESCPAGSPLGLICLSLLLIPASAG. The Extracellular segment spans residues 32–47; sequence TYCECSLGLSREALIA. The chain crosses the membrane as a helical span at residues 48-68; the sequence is LIVVLAGVSASCFCALVVVAI. The Cytoplasmic portion of the chain corresponds to 69-147; that stretch reads GVFRAKGDTC…PPPPPPPLPQ (79 aa). The interval 128 to 147 is disordered; it reads TMTAPLEPPPPPPPPPPLPQ. Residues 133-147 are compositionally biased toward pro residues; that stretch reads LEPPPPPPPPPPLPQ.

It is found in the membrane. Its subcellular location is the cytoplasmic vesicle. The protein resides in the secretory vesicle. The protein localises to the acrosome. The protein is Transmembrane protein 210 (Tmem210) of Mus musculus (Mouse).